The sequence spans 459 residues: Putrescine aminotransferase (459 aa).

Pyridoxal 5'-phosphate contacts are provided by residues 150–151 and Q274; that span reads GT. At K300 the chain carries N6-(pyridoxal phosphate)lysine. A pyridoxal 5'-phosphate-binding site is contributed by T332.

This sequence belongs to the class-III pyridoxal-phosphate-dependent aminotransferase family. Putrescine aminotransferase subfamily. Pyridoxal 5'-phosphate serves as cofactor.

It carries out the reaction an alkane-alpha,omega-diamine + 2-oxoglutarate = an omega-aminoaldehyde + L-glutamate. It catalyses the reaction putrescine + 2-oxoglutarate = 1-pyrroline + L-glutamate + H2O. The enzyme catalyses cadaverine + 2-oxoglutarate = 5-aminopentanal + L-glutamate. It functions in the pathway amine and polyamine degradation; putrescine degradation; 4-aminobutanal from putrescine (transaminase route): step 1/1. Functionally, catalyzes the aminotransferase reaction from putrescine to 2-oxoglutarate, leading to glutamate and 4-aminobutanal, which spontaneously cyclizes to form 1-pyrroline. This is the first step in one of two pathways for putrescine degradation, where putrescine is converted into 4-aminobutanoate (gamma-aminobutyrate or GABA) via 4-aminobutanal. Also functions as a cadaverine transaminase in a a L-lysine degradation pathway to succinate that proceeds via cadaverine, glutarate and L-2-hydroxyglutarate. This Escherichia coli (strain ATCC 8739 / DSM 1576 / NBRC 3972 / NCIMB 8545 / WDCM 00012 / Crooks) protein is Putrescine aminotransferase.